A 239-amino-acid chain; its full sequence is Regulator of G-protein signaling 20 (239 aa).

The disordered stretch occupies residues 1–29 (MRTANGGPRARASPSASPADPGLPEGSER). Residues 8–19 (PRARASPSASPA) are compositionally biased toward low complexity. Residues 113–229 (SFDNLMVTPA…MNSTVYKDLL (117 aa)) enclose the RGS domain.

As to quaternary structure, forms a complex with G(alpha)z/i2 subunits and mu-opioid receptors; the formation of this complex results in mu-opioid receptor desensitization. Interacts with OPRM1. In terms of processing, fatty acylated. Heavily palmitoylated in the cysteine string motif. N- and O-glycosylated in synapsomal membranes. Post-translationally, serine phosphorylated in synapsomal membranes. In terms of processing, sumoylated with SUMO1, SUMO2 and SUMO3. Sumoylation increases binding to the G-proteins, G(alpha)-i2 and G(z), and interaction with mu-opioid receptors.

The protein resides in the membrane. It is found in the nucleus. The protein localises to the cytoplasm. Functionally, inhibits signal transduction by increasing the GTPase activity of G protein alpha subunits thereby driving them into their inactive GDP-bound form. Binds selectively to G(z)-alpha and G(alpha)-i2 subunits, accelerates their GTPase activity and regulates their signaling activities. The G(z)-alpha activity is inhibited by the phosphorylation and palmitoylation of the G-protein. Negatively regulates mu-opioid receptor-mediated activation of the G-proteins. The protein is Regulator of G-protein signaling 20 (Rgs20) of Mus musculus (Mouse).